Reading from the N-terminus, the 213-residue chain is Nucleolar protein 12 (213 aa).

Residues 33–96 (GFHKRKVERK…RLVTAKTESV (64 aa)) adopt a coiled-coil conformation. The disordered stretch occupies residues 109 to 213 (TISDLDLSGA…LTGKAQHSRE (105 aa)). A compositionally biased stretch (acidic residues) spans 130 to 139 (AGDESEEEAS). Residues 170-182 (AHSRKKVKRKHPR) show a composition bias toward basic residues.

The protein belongs to the RRP17 family. As to quaternary structure, interacts with KIAA1191.

It localises to the nucleus. The protein localises to the nucleolus. It is found in the cytoplasm. Its function is as follows. Multifunctional RNA binding protein that plays a role in RNA metabolism and DNA maintenance. Participates in the resolution of DNA stress and the maintenance of genome integrity by localizing to sites of DNA insults. Also plays a role in proper nucleolar organization by limiting nucleolar size and regulating nucleolar number. Mechanistically, regulates the nucleolar levels of fibrillarin and nucleolin, two key players in pre-rRNA processing and ribosome assembly. The protein is Nucleolar protein 12 (NOL12) of Pongo abelii (Sumatran orangutan).